A 427-amino-acid polypeptide reads, in one-letter code: Indole diterpene prenyltransferase penD (427 aa).

77 to 78 provides a ligand contact to L-tryptophan; it reads YV. Substrate is bound by residues Arg99, Lys186, Tyr188, Arg259, Lys261, Tyr263, Tyr344, Tyr409, and Tyr413.

The protein belongs to the tryptophan dimethylallyltransferase family.

It functions in the pathway secondary metabolite biosynthesis. Its function is as follows. Indole diterpene prenyltransferase; part of the gene cluster that mediates the biosynthesis of the indole diterpenes penitrems. The geranylgeranyl diphosphate (GGPP) synthase penG catalyzes the first step in penitrem biosynthesis via conversion of farnesyl pyrophosphate and isopentyl pyrophosphate into geranylgeranyl pyrophosphate (GGPP). Condensation of indole-3-glycerol phosphate with GGPP by the prenyl transferase penC then forms 3-geranylgeranylindole (3-GGI). Epoxidation by the FAD-dependent monooxygenase penM leads to a epoxidized-GGI that is substrate of the terpene cyclase penB for cyclization to yield paspaline. Paspaline is subsequently converted to 13-desoxypaxilline by the cytochrome P450 monooxygenase penP, the latter being then converted to paxilline by the cytochrome P450 monooxygenase penQ. Paxilline is converted to beta-paxitriol via C-10 ketoreduction by the short-chain dehydrogenase PC-15 which can be monoprenylated at the C-20 by the indole diterpene prenyltransferase penD. A two-step elimination (acetylation and elimination) process performed by the O-acetyltransferase PC-16 and the P.simplicissimum ptmI-ortholog not yet identified in P.crustosum, leads to the production of the prenylated form of penijanthine. The FAD-linked oxidoreductase ptmO then converts the prenylated form of penijanthine into PC-M5 which is in turn transformed into PC-M4 by the aromatic dimethylallyltransferase PC-22. A series of oxidation steps involving 4 cytochrome P450 monooxygenases (PC-21, PC-05, PC-23, PC-20) and a FAD-dependent monooxygenase (PC-14) are required for the transformation of PC-M4 to penitrems A and E. Synthesis of these final products is proposed to proceed via penitrems D and C (PC-21, PC-05, PC-14) and penitrems B and F (PC-21, PC-05, PC-14, PC-23). The protein is Indole diterpene prenyltransferase penD of Penicillium crustosum (Blue mold fungus).